A 251-amino-acid polypeptide reads, in one-letter code: MLNFLNFYSVPLAELEVGKHLYWQIGNLKLHGQVFLTSWFVIGVLVLASVAASSNVKRIPSGIQNLLEYALEFIRDLAKNQIGEKEYRPWVPFVGTLFLFIFVSNWSGALVPFKLIHLPEGELAAPTSDINTTVALALLTSLAYFYAGFSKKGLGYFGNYVQPVSFMLPFKIIEDFTKPLSLSFRLFGNILADELVVGVLVLLVPLFVPLPVMALGLFTSAIQALIFATLAAAYIGEAMEDHHGEEHEEHH.

The next 5 membrane-spanning stretches (helical) occupy residues 34–54 (VFLT…AASS), 93–113 (FVGT…LVPF), 130–150 (INTT…AGFS), 195–215 (LVVG…VMAL), and 216–236 (GLFT…AYIG).

Belongs to the ATPase A chain family. In terms of assembly, F-type ATPases have 2 components, CF(1) - the catalytic core - and CF(0) - the membrane proton channel. CF(1) has five subunits: alpha(3), beta(3), gamma(1), delta(1), epsilon(1). CF(0) has four main subunits: a, b, b' and c.

The protein resides in the cellular thylakoid membrane. In terms of biological role, key component of the proton channel; it plays a direct role in the translocation of protons across the membrane. The chain is ATP synthase subunit a from Trichormus variabilis (strain ATCC 29413 / PCC 7937) (Anabaena variabilis).